The primary structure comprises 407 residues: Carbamoyl phosphate synthase small chain (407 aa).

Positions 1 to 205 (MTETTPKTAP…LQDGYGEQDA (205 aa)) are CPSase. L-glutamine is bound by residues serine 60, glycine 257, and glycine 259. The 189-residue stretch at 209–397 (HVVALDFGVK…INLIRERKGQ (189 aa)) folds into the Glutamine amidotransferase type-1 domain. The active-site Nucleophile is the cysteine 286. Leucine 287, glutamine 290, asparagine 328, glycine 330, and phenylalanine 331 together coordinate L-glutamine. Residues histidine 370 and glutamate 372 contribute to the active site.

The protein belongs to the CarA family. In terms of assembly, composed of two chains; the small (or glutamine) chain promotes the hydrolysis of glutamine to ammonia, which is used by the large (or ammonia) chain to synthesize carbamoyl phosphate. Tetramer of heterodimers (alpha,beta)4.

The enzyme catalyses hydrogencarbonate + L-glutamine + 2 ATP + H2O = carbamoyl phosphate + L-glutamate + 2 ADP + phosphate + 2 H(+). It carries out the reaction L-glutamine + H2O = L-glutamate + NH4(+). The protein operates within amino-acid biosynthesis; L-arginine biosynthesis; carbamoyl phosphate from bicarbonate: step 1/1. It participates in pyrimidine metabolism; UMP biosynthesis via de novo pathway; (S)-dihydroorotate from bicarbonate: step 1/3. Its function is as follows. Small subunit of the glutamine-dependent carbamoyl phosphate synthetase (CPSase). CPSase catalyzes the formation of carbamoyl phosphate from the ammonia moiety of glutamine, carbonate, and phosphate donated by ATP, constituting the first step of 2 biosynthetic pathways, one leading to arginine and/or urea and the other to pyrimidine nucleotides. The small subunit (glutamine amidotransferase) binds and cleaves glutamine to supply the large subunit with the substrate ammonia. The protein is Carbamoyl phosphate synthase small chain of Brucella abortus (strain S19).